An 86-amino-acid chain; its full sequence is Large ribosomal subunit protein bL31 (86 aa).

Residues 66 to 86 are disordered; it reads GMGSANSATSKEQKADKDSQK. The segment covering 76 to 86 has biased composition (basic and acidic residues); the sequence is KEQKADKDSQK.

This sequence belongs to the bacterial ribosomal protein bL31 family. Type A subfamily. Part of the 50S ribosomal subunit.

Functionally, binds the 23S rRNA. This is Large ribosomal subunit protein bL31 from Prochlorococcus marinus (strain MIT 9215).